The following is a 515-amino-acid chain: uncharacterized protein (515 aa).

The protein belongs to the AllF family.

This is an uncharacterized protein from Escherichia coli (strain K12).